A 262-amino-acid chain; its full sequence is Expansin-A7 (262 aa).

Residues 1 to 30 (MGPISSSWSFNKFFSIVFVVFAISGEFVAG) form the signal peptide. In terms of domain architecture, Expansin-like EG45 spans 55–167 (GGACGYGNLF…RRVPCQRSGG (113 aa)). Cystine bridges form between Cys-58–Cys-86, Cys-89–Cys-162, and Cys-94–Cys-100. The 81-residue stretch at 177–257 (YWLLIFVMNV…NWSGGKTYKS (81 aa)) folds into the Expansin-like CBD domain.

Belongs to the expansin family. Expansin A subfamily.

It localises to the secreted. It is found in the cell wall. The protein localises to the membrane. Its function is as follows. Causes loosening and extension of plant cell walls by disrupting non-covalent bonding between cellulose microfibrils and matrix glucans. No enzymatic activity has been found. This chain is Expansin-A7 (EXPA7), found in Arabidopsis thaliana (Mouse-ear cress).